A 156-amino-acid chain; its full sequence is Ribosomal RNA large subunit methyltransferase H (156 aa).

Residues L72, G104, and 123-128 (FGKMVW) each bind S-adenosyl-L-methionine.

Belongs to the RNA methyltransferase RlmH family. Homodimer.

It is found in the cytoplasm. It catalyses the reaction pseudouridine(1915) in 23S rRNA + S-adenosyl-L-methionine = N(3)-methylpseudouridine(1915) in 23S rRNA + S-adenosyl-L-homocysteine + H(+). In terms of biological role, specifically methylates the pseudouridine at position 1915 (m3Psi1915) in 23S rRNA. This Ruegeria sp. (strain TM1040) (Silicibacter sp.) protein is Ribosomal RNA large subunit methyltransferase H.